An 88-amino-acid polypeptide reads, in one-letter code: Putative membrane protein insertion efficiency factor (88 aa).

The interval 66–88 (DFVPPKKEKNADSEHSCKAHHHH) is disordered. A compositionally biased stretch (basic and acidic residues) spans 69 to 82 (PPKKEKNADSEHSC).

The protein belongs to the UPF0161 family.

It localises to the cell membrane. Functionally, could be involved in insertion of integral membrane proteins into the membrane. This is Putative membrane protein insertion efficiency factor from Listeria monocytogenes serotype 4b (strain CLIP80459).